We begin with the raw amino-acid sequence, 465 residues long: ATP synthase subunit beta (465 aa).

155-162 (GGAGVGKT) lines the ATP pocket.

Belongs to the ATPase alpha/beta chains family. As to quaternary structure, F-type ATPases have 2 components, CF(1) - the catalytic core - and CF(0) - the membrane proton channel. CF(1) has five subunits: alpha(3), beta(3), gamma(1), delta(1), epsilon(1). CF(0) has three main subunits: a(1), b(2) and c(9-12). The alpha and beta chains form an alternating ring which encloses part of the gamma chain. CF(1) is attached to CF(0) by a central stalk formed by the gamma and epsilon chains, while a peripheral stalk is formed by the delta and b chains.

Its subcellular location is the cell membrane. The enzyme catalyses ATP + H2O + 4 H(+)(in) = ADP + phosphate + 5 H(+)(out). Functionally, produces ATP from ADP in the presence of a proton gradient across the membrane. The catalytic sites are hosted primarily by the beta subunits. The polypeptide is ATP synthase subunit beta (Buchnera aphidicola subsp. Baizongia pistaciae (strain Bp)).